We begin with the raw amino-acid sequence, 81 residues long: Trefoil factor 3 (81 aa).

A signal peptide spans 1–23 (MEARTFWLLVVAVLALGSSSSTG). Residues 31–74 (NQCAVPAKDRVDCGYPEVTPEQCNNRGCCFDSSIHGVPWCFKPL) form the P-type domain. 3 cysteine pairs are disulfide-bonded: Cys33–Cys59, Cys43–Cys58, and Cys53–Cys70.

Monomer. Homodimer; disulfide-linked.

It localises to the secreted. The protein localises to the extracellular space. It is found in the extracellular matrix. Its subcellular location is the cytoplasm. Involved in the maintenance and repair of the intestinal mucosa. Promotes the mobility of epithelial cells in healing processes (motogen). The polypeptide is Trefoil factor 3 (TFF3) (Bos taurus (Bovine)).